A 1387-amino-acid chain; its full sequence is DNA-directed RNA polymerase subunit beta (1387 aa).

This sequence belongs to the RNA polymerase beta chain family. The RNAP catalytic core consists of 2 alpha, 1 beta, 1 beta' and 1 omega subunit. When a sigma factor is associated with the core the holoenzyme is formed, which can initiate transcription.

The enzyme catalyses RNA(n) + a ribonucleoside 5'-triphosphate = RNA(n+1) + diphosphate. In terms of biological role, DNA-dependent RNA polymerase catalyzes the transcription of DNA into RNA using the four ribonucleoside triphosphates as substrates. The chain is DNA-directed RNA polymerase subunit beta from Xanthomonas campestris pv. campestris (strain ATCC 33913 / DSM 3586 / NCPPB 528 / LMG 568 / P 25).